The primary structure comprises 251 residues: Hydroxyacylglutathione hydrolase (251 aa).

H53, H55, D57, H58, H110, D127, and H165 together coordinate Zn(2+).

It belongs to the metallo-beta-lactamase superfamily. Glyoxalase II family. As to quaternary structure, monomer. Zn(2+) serves as cofactor.

It carries out the reaction an S-(2-hydroxyacyl)glutathione + H2O = a 2-hydroxy carboxylate + glutathione + H(+). Its pathway is secondary metabolite metabolism; methylglyoxal degradation; (R)-lactate from methylglyoxal: step 2/2. Thiolesterase that catalyzes the hydrolysis of S-D-lactoyl-glutathione to form glutathione and D-lactic acid. The sequence is that of Hydroxyacylglutathione hydrolase from Erwinia tasmaniensis (strain DSM 17950 / CFBP 7177 / CIP 109463 / NCPPB 4357 / Et1/99).